The primary structure comprises 446 residues: MREILHIQGGQCGNQIGSKFWEVVCDEHGIDPTGRYVGTSDLQLERVNVYYNEASCGRFVPRAVLMDLEPGTMDSVRTGPYGQIFRPDNFVFGQSGAGNNWAKGHYTEGAELIDSVLDVVRKEAENCDCLQGFQVCHSLGGGTGSGMGTLLISKIREEYPDRMMLTFSVFPSPKVSDTVVEPYNATLSVHQLVENADECMVLDNEALYDICFRTLKLTTPSFGDLNHLISATMSGVTCCLRFPGQLNSDLRKLAVNLIPFPRLHFFMVGFAPLTSRGSQQYRALTVPELTQQMWDAKNMMCAADPRHGRYLTASAMFRGKMSTKEVDEQMINVQNKNSSYFVEWIPNNVKSSVCDIPPRGLSMASTFIGNSTSIQEMFRRVSEQFTAMFRRKAFLHWYTGEGMDEMEFTEAESNMNDLVSEYQQYQDATADEEGDYEDEDEALHDE.

The GTP site is built by Gln-11, Glu-69, Ser-138, Gly-142, Thr-143, Gly-144, Asn-204, and Asn-226. Glu-69 serves as a coordination point for Mg(2+). Residues 417 to 426 (DLVSEYQQYQ) show a composition bias toward polar residues. Positions 417–446 (DLVSEYQQYQDATADEEGDYEDEDEALHDE) are disordered. A compositionally biased stretch (acidic residues) spans 429–446 (TADEEGDYEDEDEALHDE).

Belongs to the tubulin family. As to quaternary structure, dimer of alpha and beta chains. A typical microtubule is a hollow water-filled tube with an outer diameter of 25 nm and an inner diameter of 15 nM. Alpha-beta heterodimers associate head-to-tail to form protofilaments running lengthwise along the microtubule wall with the beta-tubulin subunit facing the microtubule plus end conferring a structural polarity. Microtubules usually have 13 protofilaments but different protofilament numbers can be found in some organisms and specialized cells. Requires Mg(2+) as cofactor.

It is found in the cytoplasm. Its subcellular location is the cytoskeleton. Tubulin is the major constituent of microtubules, a cylinder consisting of laterally associated linear protofilaments composed of alpha- and beta-tubulin heterodimers. Microtubules grow by the addition of GTP-tubulin dimers to the microtubule end, where a stabilizing cap forms. Below the cap, tubulin dimers are in GDP-bound state, owing to GTPase activity of alpha-tubulin. This chain is Tubulin beta-4 chain (TUBB4), found in Eleusine indica (Goosegrass).